Consider the following 146-residue polypeptide: Large ribosomal subunit protein uL15 (146 aa).

The segment at 1-54 is disordered; the sequence is MKLHELKPAAGSKKAPKRIGRGTGSGLGRNAGKGEKGQNARSGGGVRPGFEGGQ. Gly residues-rich tracts occupy residues 21–31 and 42–52; these read RGTGSGLGRNA and SGGGVRPGFEG.

This sequence belongs to the universal ribosomal protein uL15 family. Part of the 50S ribosomal subunit.

In terms of biological role, binds to the 23S rRNA. This is Large ribosomal subunit protein uL15 from Clostridium beijerinckii (strain ATCC 51743 / NCIMB 8052) (Clostridium acetobutylicum).